We begin with the raw amino-acid sequence, 653 residues long: Acetyl-coenzyme A synthetase (653 aa).

Residues 195–198 (RGGK) and T314 contribute to the CoA site. ATP-binding positions include 390–392 (GEP), 414–419 (DTWWQT), D505, and R520. S528 is a CoA binding site. R531 provides a ligand contact to ATP. V542 and V547 together coordinate Mg(2+). Position 617 is an N6-acetyllysine (K617).

Belongs to the ATP-dependent AMP-binding enzyme family. Mg(2+) serves as cofactor. Post-translationally, acetylated. Deacetylation by the SIR2-homolog deacetylase activates the enzyme.

The catalysed reaction is acetate + ATP + CoA = acetyl-CoA + AMP + diphosphate. In terms of biological role, catalyzes the conversion of acetate into acetyl-CoA (AcCoA), an essential intermediate at the junction of anabolic and catabolic pathways. AcsA undergoes a two-step reaction. In the first half reaction, AcsA combines acetate with ATP to form acetyl-adenylate (AcAMP) intermediate. In the second half reaction, it can then transfer the acetyl group from AcAMP to the sulfhydryl group of CoA, forming the product AcCoA. The protein is Acetyl-coenzyme A synthetase of Pasteurella multocida (strain Pm70).